A 163-amino-acid polypeptide reads, in one-letter code: Calcium-binding protein I (163 aa).

3 consecutive EF-hand domains span residues 20-42, 82-117, and 118-153; these read DKNKDRQYSIDEIVQLLKKNSKN, KPEIDIESFLLRFDKNNDKMISHHELKTKLDELGCG, and NSKKTTDYVFEQIDTNKEGSLSYEDLEGFVKFLKQD. Positions 95, 97, 99, 101, 106, 131, 133, 135, 137, and 142 each coordinate Ca(2+).

In Dictyostelium discoideum (Social amoeba), this protein is Calcium-binding protein I (cbpI).